The primary structure comprises 78 residues: Rubredoxin (78 aa).

The Rubredoxin-like domain occupies 23–74; sequence DARLECKICWWEYDPEVGDPVWQIAPGTSFSALPAHWRCPNCDGEAEQFMVL. Positions 28, 31, 61, and 64 each coordinate Fe cation.

Belongs to the rubredoxin family. Requires Fe(3+) as cofactor.

Its function is as follows. Rubredoxin is a small nonheme, iron protein lacking acid-labile sulfide. Its single Fe, chelated to 4 Cys, functions as an electron acceptor and may also stabilize the conformation of the molecule. Could be involved in hydrogenase-linked redox processes. This chain is Rubredoxin (hoxR), found in Cupriavidus necator (strain ATCC 17699 / DSM 428 / KCTC 22496 / NCIMB 10442 / H16 / Stanier 337) (Ralstonia eutropha).